The sequence spans 362 residues: Aminomethyltransferase (362 aa).

It belongs to the GcvT family. The glycine cleavage system is composed of four proteins: P, T, L and H.

The enzyme catalyses N(6)-[(R)-S(8)-aminomethyldihydrolipoyl]-L-lysyl-[protein] + (6S)-5,6,7,8-tetrahydrofolate = N(6)-[(R)-dihydrolipoyl]-L-lysyl-[protein] + (6R)-5,10-methylene-5,6,7,8-tetrahydrofolate + NH4(+). The glycine cleavage system catalyzes the degradation of glycine. This Listeria monocytogenes serotype 4b (strain F2365) protein is Aminomethyltransferase.